The following is a 72-amino-acid chain: SRY-related protein ADW2 (72 aa).

A DNA-binding region (HMG box) is located at residues 1-69 (VKRPMNAFMV…KHMADYADYK (69 aa)).

The protein resides in the nucleus. The protein is SRY-related protein ADW2 of Alligator mississippiensis (American alligator).